A 118-amino-acid chain; its full sequence is Ribonuclease P protein component (118 aa).

The protein belongs to the RnpA family. Consists of a catalytic RNA component (M1 or rnpB) and a protein subunit.

The enzyme catalyses Endonucleolytic cleavage of RNA, removing 5'-extranucleotides from tRNA precursor.. Functionally, RNaseP catalyzes the removal of the 5'-leader sequence from pre-tRNA to produce the mature 5'-terminus. It can also cleave other RNA substrates such as 4.5S RNA. The protein component plays an auxiliary but essential role in vivo by binding to the 5'-leader sequence and broadening the substrate specificity of the ribozyme. The protein is Ribonuclease P protein component of Ureaplasma urealyticum serovar 10 (strain ATCC 33699 / Western).